The sequence spans 337 residues: Movement protein (337 aa).

Over residues 1–11 (MAGLWRSNSTL) the composition is skewed to polar residues. Disordered stretches follow at residues 1 to 24 (MAGLWRSNSTLDVERGRNRTQTET) and 273 to 337 (SVVR…VRQT).

The protein localises to the host cell junction. The protein resides in the host plasmodesma. Functionally, transports viral genome to neighboring plant cells directly through plasmosdesmata, without any budding. The movement protein allows efficient cell to cell propagation, by bypassing the host cell wall barrier. Acts by forming a tubular structure at the host plasmodesmata, enlarging it enough to allow free passage of virion capsids. This chain is Movement protein, found in Olive latent virus 2 (isolate Italy) (OLV-2).